Consider the following 454-residue polypeptide: Histidine--tRNA ligase (454 aa).

Residues 434–454 (ADAGAWNPPTEDLHPGVIGTW) form a disordered region.

It belongs to the class-II aminoacyl-tRNA synthetase family. In terms of assembly, homodimer.

Its subcellular location is the cytoplasm. It carries out the reaction tRNA(His) + L-histidine + ATP = L-histidyl-tRNA(His) + AMP + diphosphate + H(+). This is Histidine--tRNA ligase (hisS) from Cutibacterium acnes (strain DSM 16379 / KPA171202) (Propionibacterium acnes).